Here is a 718-residue protein sequence, read N- to C-terminus: Sec-independent protein translocase protein TatCt (718 aa).

Transmembrane regions (helical) follow at residues 34–54 (VFIVFLVGFLGTFYALRLYVW), 84–104 (ILLQAKIGLVVGVLFALPPFI), 137–157 (LFAAGVAYGYFVFFPFTFAFL), 178–198 (FIFLLTLSFGLASQLPLAMTG), 214–231 (WRHAIVGIFAFGALFTPP), 234–254 (FTQIMWAVPVILLYAFSLYLA), 280–300 (LAGVGVVVGLLVYAFYEYGGV), and 325–345 (LGAFVVAGGFVGLAFGLAYLV). The interval 421-451 (REAEAADAEDEPGELEDRTTRAGGAFVSELT) is disordered. The segment covering 425–434 (AADAEDEPGE) has biased composition (acidic residues). Helical transmembrane passes span 478 to 498 (AFWVVGWFMLVLATTFGWLYT), 539 to 559 (FSTILAVLATLPLVAYFVWPA), 572 to 592 (TVFVWTGALAGGLLGGFALGY), 621 to 641 (FFWLIFFTTAGIGLLADVPIL), 661 to 681 (EVTVFILAISAVFTPASITTM), and 682 to 702 (FMVTLPLMAAYGVGLGVLFVL).

The protein belongs to the TatC family. As to quaternary structure, forms a complex with TatA.

The protein resides in the cell membrane. Its function is as follows. Part of the twin-arginine translocation (Tat) system that transports large folded proteins containing a characteristic twin-arginine motif in their signal peptide across membranes. The protein is Sec-independent protein translocase protein TatCt of Haloferax volcanii (strain ATCC 29605 / DSM 3757 / JCM 8879 / NBRC 14742 / NCIMB 2012 / VKM B-1768 / DS2) (Halobacterium volcanii).